Here is a 174-residue protein sequence, read N- to C-terminus: Glutaredoxin-C5, chloroplastic (174 aa).

The N-terminal 51 residues, 1–51 (MAVTAFNTLKLVSSSLDPIPSVSCSSYSFSLIYVGSPYKRCLKQSCSVRAM), are a transit peptide targeting the chloroplast. The residue at position 52 (threonine 52) is an N-acetylthreonine. The residue at position 90 (cysteine 90) is an S-glutathionyl cysteine; partial. A disulfide bridge connects residues cysteine 90 and cysteine 93. The 79-residue stretch at 93–171 (CTEVKTLFKR…LMLAEANGKN (79 aa)) folds into the Glutaredoxin domain. Residues valine 135, cysteine 148, and threonine 149 each coordinate glutathione. Cysteine 148 bears the S-glutathionyl cysteine; partial mark.

This sequence belongs to the glutaredoxin family. CPYC subfamily. In terms of assembly, monomeric apoprotein and homodimeric holoprotein containing a [2Fe-2S] cluster. No in vitro interactions with SUFE1, BOLA1, BOLA2 or BOLA4. Glutathionylated.

The protein localises to the plastid. It is found in the chloroplast. Functionally, has a glutathione-disulfide oxidoreductase activity in the presence of NADPH and glutathione reductase. Reduces low molecular weight disulfides and proteins. Can assemble a [2Fe-2S] cluster, but cannot transfer it to an apoferredoxin. The sequence is that of Glutaredoxin-C5, chloroplastic from Arabidopsis thaliana (Mouse-ear cress).